The sequence spans 205 residues: Cytochrome c biogenesis ATP-binding export protein CcmA (205 aa).

An ABC transporter domain is found at 2 to 204 (LEVSNLTAIR…SPKLRKIKLG (203 aa)). 34–41 (GRNGTGKT) contributes to the ATP binding site.

It belongs to the ABC transporter superfamily. CcmA exporter (TC 3.A.1.107) family. As to quaternary structure, the complex is composed of two ATP-binding proteins (CcmA) and two transmembrane proteins (CcmB).

It is found in the cell inner membrane. It catalyses the reaction heme b(in) + ATP + H2O = heme b(out) + ADP + phosphate + H(+). Its function is as follows. Part of the ABC transporter complex CcmAB involved in the biogenesis of c-type cytochromes; once thought to export heme, this seems not to be the case, but its exact role is uncertain. Responsible for energy coupling to the transport system. In Vibrio vulnificus (strain YJ016), this protein is Cytochrome c biogenesis ATP-binding export protein CcmA.